Reading from the N-terminus, the 252-residue chain is Adenosylcobinamide-GDP ribazoletransferase (252 aa).

The next 7 membrane-spanning stretches (helical) occupy residues 34–54 (GASF…IIYK), 55–75 (LCII…AGIV), 113–133 (YACL…CSIV), 138–158 (LIII…AFIG), 174–194 (IGKW…FFLM), 198–218 (FIYV…FNVF), and 230–250 (LLGA…CVII).

This sequence belongs to the CobS family. It depends on Mg(2+) as a cofactor.

It is found in the cell membrane. The enzyme catalyses alpha-ribazole + adenosylcob(III)inamide-GDP = adenosylcob(III)alamin + GMP + H(+). The catalysed reaction is alpha-ribazole 5'-phosphate + adenosylcob(III)inamide-GDP = adenosylcob(III)alamin 5'-phosphate + GMP + H(+). Its pathway is cofactor biosynthesis; adenosylcobalamin biosynthesis; adenosylcobalamin from cob(II)yrinate a,c-diamide: step 7/7. Functionally, joins adenosylcobinamide-GDP and alpha-ribazole to generate adenosylcobalamin (Ado-cobalamin). Also synthesizes adenosylcobalamin 5'-phosphate from adenosylcobinamide-GDP and alpha-ribazole 5'-phosphate. This Clostridium kluyveri (strain NBRC 12016) protein is Adenosylcobinamide-GDP ribazoletransferase.